The sequence spans 72 residues: Putative transmembrane protein DDB_G0272126 (72 aa).

A run of 2 helical transmembrane segments spans residues 6-26 (KIIKSSYTLLSFFYFIANTII) and 38-58 (IILVSLYYLVFSLFITRIFYG).

It localises to the membrane. This Dictyostelium discoideum (Social amoeba) protein is Putative transmembrane protein DDB_G0272126.